The sequence spans 343 residues: Probable dual-specificity RNA methyltransferase RlmN (343 aa).

The active-site Proton acceptor is Glu-91. One can recognise a Radical SAM core domain in the interval 97-326 (HPDRITACIS…AEIRREKGSD (230 aa)). A disulfide bridge links Cys-104 with Cys-331. 3 residues coordinate [4Fe-4S] cluster: Cys-111, Cys-115, and Cys-118. S-adenosyl-L-methionine is bound by residues 158-159 (GE), Ser-190, 213-215 (SLH), and Asn-289. The active-site S-methylcysteine intermediate is Cys-331.

It belongs to the radical SAM superfamily. RlmN family. [4Fe-4S] cluster is required as a cofactor.

It localises to the cytoplasm. The enzyme catalyses adenosine(2503) in 23S rRNA + 2 reduced [2Fe-2S]-[ferredoxin] + 2 S-adenosyl-L-methionine = 2-methyladenosine(2503) in 23S rRNA + 5'-deoxyadenosine + L-methionine + 2 oxidized [2Fe-2S]-[ferredoxin] + S-adenosyl-L-homocysteine. The catalysed reaction is adenosine(37) in tRNA + 2 reduced [2Fe-2S]-[ferredoxin] + 2 S-adenosyl-L-methionine = 2-methyladenosine(37) in tRNA + 5'-deoxyadenosine + L-methionine + 2 oxidized [2Fe-2S]-[ferredoxin] + S-adenosyl-L-homocysteine. Specifically methylates position 2 of adenine 2503 in 23S rRNA and position 2 of adenine 37 in tRNAs. In Thermotoga sp. (strain RQ2), this protein is Probable dual-specificity RNA methyltransferase RlmN.